Consider the following 687-residue polypeptide: FAD-dependent oxidoreductase domain-containing protein 2 (687 aa).

A signal peptide spans 1–22 (MSVIQLVFRLLCVLDLLLAVSA). Residues Asn-29 and Asn-305 are each glycosylated (N-linked (GlcNAc...) asparagine).

It belongs to the FOXRED2 family. The cofactor is FAD. In terms of processing, N-glycosylated.

Its subcellular location is the endoplasmic reticulum lumen. Probable flavoprotein which may function in endoplasmic reticulum associated degradation (ERAD). May bind non-native proteins in the endoplasmic reticulum and target them to the ubiquitination machinery for subsequent degradation. The protein is FAD-dependent oxidoreductase domain-containing protein 2 (foxred2) of Danio rerio (Zebrafish).